Here is a 162-residue protein sequence, read N- to C-terminus: Cytochrome c-type biogenesis protein CcmE (162 aa).

Over 1 to 8 (MNPRRKKR) the chain is Cytoplasmic. Residues 9–29 (LTLAVALIGGVAAIASLLLYA) traverse the membrane as a helical; Signal-anchor for type II membrane protein segment. The Periplasmic portion of the chain corresponds to 30–162 (LNSNLNLFYT…YSQQKAPDTK (133 aa)). Positions 131 and 135 each coordinate heme. A disordered region spans residues 139 to 162 (EVAEAMGQKHEKLDYSQQKAPDTK). Positions 153-162 (YSQQKAPDTK) are enriched in polar residues.

It belongs to the CcmE/CycJ family.

The protein localises to the cell inner membrane. In terms of biological role, heme chaperone required for the biogenesis of c-type cytochromes. Transiently binds heme delivered by CcmC and transfers the heme to apo-cytochromes in a process facilitated by CcmF and CcmH. The sequence is that of Cytochrome c-type biogenesis protein CcmE from Shewanella putrefaciens (strain CN-32 / ATCC BAA-453).